The primary structure comprises 311 residues: Small ribosomal subunit biogenesis GTPase RsgA (311 aa).

The region spanning 77–239 (LSKQSHIIAT…IIDTPGIKGF (163 aa)) is the CP-type G domain. GTP-binding positions include 126–129 (NKTD) and 180–188 (GHSGVGKST). Zn(2+) is bound by residues cysteine 263, cysteine 268, histidine 270, and cysteine 276.

The protein belongs to the TRAFAC class YlqF/YawG GTPase family. RsgA subfamily. In terms of assembly, monomer. Associates with 30S ribosomal subunit, binds 16S rRNA. The cofactor is Zn(2+).

It localises to the cytoplasm. Functionally, one of several proteins that assist in the late maturation steps of the functional core of the 30S ribosomal subunit. Helps release RbfA from mature subunits. May play a role in the assembly of ribosomal proteins into the subunit. Circularly permuted GTPase that catalyzes slow GTP hydrolysis, GTPase activity is stimulated by the 30S ribosomal subunit. This chain is Small ribosomal subunit biogenesis GTPase RsgA, found in Azobacteroides pseudotrichonymphae genomovar. CFP2.